A 300-amino-acid chain; its full sequence is Epimerase family protein MW0731 (300 aa).

This sequence belongs to the NAD(P)-dependent epimerase/dehydratase family. SDR39U1 subfamily.

The chain is Epimerase family protein MW0731 from Staphylococcus aureus (strain MW2).